A 275-amino-acid chain; its full sequence is Large ribosomal subunit protein uL2 (275 aa).

A disordered region spans residues 220–275 (VRGAAMNPRDHPHGGGEGRAPRGMPTPKTKWGKPARGVKTRHNPRTDPFIIRRRTR). A compositionally biased stretch (basic and acidic residues) spans 227–239 (PRDHPHGGGEGRA). Basic residues predominate over residues 249–262 (KWGKPARGVKTRHN).

This sequence belongs to the universal ribosomal protein uL2 family. Part of the 50S ribosomal subunit. Forms a bridge to the 30S subunit in the 70S ribosome.

In terms of biological role, one of the primary rRNA binding proteins. Required for association of the 30S and 50S subunits to form the 70S ribosome, for tRNA binding and peptide bond formation. It has been suggested to have peptidyltransferase activity; this is somewhat controversial. Makes several contacts with the 16S rRNA in the 70S ribosome. In Roseiflexus sp. (strain RS-1), this protein is Large ribosomal subunit protein uL2.